Here is a 56-residue protein sequence, read N- to C-terminus: UPF0391 membrane protein Noc_0484 (56 aa).

Helical transmembrane passes span valine 6–isoleucine 26 and glutamate 29–glycine 49.

This sequence belongs to the UPF0391 family.

The protein localises to the cell membrane. The chain is UPF0391 membrane protein Noc_0484 from Nitrosococcus oceani (strain ATCC 19707 / BCRC 17464 / JCM 30415 / NCIMB 11848 / C-107).